The chain runs to 158 residues: MTYLQRVTNCVLQTDDKVLLLQKPRRGWWVAPGGKMESGESVRDSVIREYREETGIYIINPQLKGVFTFIIKDGDHIVSEWMMFTFVADSYTGQNVSESEEGKLQWHDVNDIQNLPMAPGDGHILDFMMKGQGLLHGTFTYTPEFELLSYRLDPQHIK.

The 128-residue stretch at 3–130 folds into the Nudix hydrolase domain; sequence YLQRVTNCVL…DGHILDFMMK (128 aa). Residues 34-55 carry the Nudix box motif; sequence GKMESGESVRDSVIREYREETG. Positions 49 and 53 each coordinate Mg(2+).

The protein belongs to the Nudix hydrolase family. Requires Mg(2+) as cofactor.

This is an uncharacterized protein from Bacillus subtilis (strain 168).